The chain runs to 183 residues: Dual-action ribosomal maturation protein DarP (183 aa).

Belongs to the DarP family.

It is found in the cytoplasm. Member of a network of 50S ribosomal subunit biogenesis factors which assembles along the 30S-50S interface, preventing incorrect 23S rRNA structures from forming. Promotes peptidyl transferase center (PTC) maturation. This chain is Dual-action ribosomal maturation protein DarP, found in Shigella boydii serotype 18 (strain CDC 3083-94 / BS512).